The following is a 346-amino-acid chain: D-alanine--D-alanine ligase (346 aa).

The ATP-grasp domain maps to 133-327; it reads KLYAKSVGVK…ALADQISLEK (195 aa). 159-211 contacts ATP; that stretch reads LSFPCIIKPARLGSSIGISIVKDEKDLEYAKDVGFEFDNDLVVEEFKNNIKEY. Mg(2+) is bound by residues D284, E296, and N298.

Belongs to the D-alanine--D-alanine ligase family. It depends on Mg(2+) as a cofactor. Mn(2+) serves as cofactor.

Its subcellular location is the cytoplasm. It catalyses the reaction 2 D-alanine + ATP = D-alanyl-D-alanine + ADP + phosphate + H(+). The protein operates within cell wall biogenesis; peptidoglycan biosynthesis. Functionally, cell wall formation. The polypeptide is D-alanine--D-alanine ligase (Campylobacter jejuni subsp. jejuni serotype O:2 (strain ATCC 700819 / NCTC 11168)).